We begin with the raw amino-acid sequence, 455 residues long: D-arabinitol 4-dehydrogenase (455 aa).

The protein belongs to the mannitol dehydrogenase family. Monomer.

It catalyses the reaction D-arabinitol + NAD(+) = D-xylulose + NADH + H(+). Its pathway is carbohydrate metabolism; D-arabinitol metabolism. This chain is D-arabinitol 4-dehydrogenase (dalD), found in Klebsiella pneumoniae.